Here is an 882-residue protein sequence, read N- to C-terminus: Translation initiation factor IF-2 (882 aa).

The segment at 28 to 296 (GIRKSADDSV…LQQGFQKPAQ (269 aa)) is disordered. Over residues 67–81 (STLNIPGTGGKSKSV) the composition is skewed to polar residues. Over residues 92 to 209 (VKRDPQEAER…RMAEENKWTD (118 aa)) the composition is skewed to basic and acidic residues. Over residues 244 to 258 (GRGRNAKAARPKKGN) the composition is skewed to basic residues. Positions 259-272 (KHAESKADREEARA) are enriched in basic and acidic residues. A tr-type G domain is found at 381–550 (PRAPVVTIMG…LLQAEVLELK (170 aa)). Residues 390–397 (GHVDHGKT) form a G1 region. A GTP-binding site is contributed by 390 to 397 (GHVDHGKT). A G2 region spans residues 415–419 (GITQH). Residues 436–439 (DTPG) form a G3 region. GTP is bound by residues 436 to 440 (DTPGH) and 490 to 493 (NKID). Residues 490-493 (NKID) are G4. The tract at residues 526-528 (SAK) is G5. The residue at position 800 (K800) is an N6-acetyllysine.

It belongs to the TRAFAC class translation factor GTPase superfamily. Classic translation factor GTPase family. IF-2 subfamily.

It localises to the cytoplasm. Its function is as follows. One of the essential components for the initiation of protein synthesis. Protects formylmethionyl-tRNA from spontaneous hydrolysis and promotes its binding to the 30S ribosomal subunits. Also involved in the hydrolysis of GTP during the formation of the 70S ribosomal complex. The sequence is that of Translation initiation factor IF-2 from Shigella boydii serotype 4 (strain Sb227).